Consider the following 445-residue polypeptide: Trigger factor (445 aa).

Residues Gly-162–Thr-247 form the PPIase FKBP-type domain.

This sequence belongs to the FKBP-type PPIase family. Tig subfamily.

It localises to the cytoplasm. The enzyme catalyses [protein]-peptidylproline (omega=180) = [protein]-peptidylproline (omega=0). In terms of biological role, involved in protein export. Acts as a chaperone by maintaining the newly synthesized protein in an open conformation. Functions as a peptidyl-prolyl cis-trans isomerase. This Rickettsia bellii (strain OSU 85-389) protein is Trigger factor.